The sequence spans 266 residues: Putative carbamate hydrolase RutD (266 aa).

The protein belongs to the AB hydrolase superfamily. Hydrolase RutD family.

The catalysed reaction is carbamate + 2 H(+) = NH4(+) + CO2. In terms of biological role, involved in pyrimidine catabolism. May facilitate the hydrolysis of carbamate, a reaction that can also occur spontaneously. This Enterobacter cloacae subsp. cloacae (strain ATCC 13047 / DSM 30054 / NBRC 13535 / NCTC 10005 / WDCM 00083 / NCDC 279-56) protein is Putative carbamate hydrolase RutD.